Here is a 599-residue protein sequence, read N- to C-terminus: UvrABC system protein C (599 aa).

In terms of domain architecture, GIY-YIG spans 13-91 (NLPGVYRMIN…IKGFMPRYNV (79 aa)). One can recognise a UVR domain in the interval 200-235 (QQVMDELGEKMNEAAEKMEYELAAVYRDRIQSLRQV).

It belongs to the UvrC family. In terms of assembly, interacts with UvrB in an incision complex.

The protein localises to the cytoplasm. In terms of biological role, the UvrABC repair system catalyzes the recognition and processing of DNA lesions. UvrC both incises the 5' and 3' sides of the lesion. The N-terminal half is responsible for the 3' incision and the C-terminal half is responsible for the 5' incision. The protein is UvrABC system protein C of Methylobacillus flagellatus (strain ATCC 51484 / DSM 6875 / VKM B-1610 / KT).